The chain runs to 424 residues: GTPase Obg (424 aa).

An Obg domain is found at 1-158 (MFIDTAKILV…RMINLEIKLL (158 aa)). The region spanning 159–331 (ADVGLIGFPN…LIKEVTRQLS (173 aa)) is the OBG-type G domain. Residues 165–172 (GFPNVGKS), 190–194 (FTTLK), 212–215 (DIPG), 282–285 (NKID), and 312–314 (SAA) contribute to the GTP site. Mg(2+) contacts are provided by Ser-172 and Thr-192. Positions 345–424 (RFMPEEKRFT…LNDFEFDFLL (80 aa)) constitute an OCT domain.

This sequence belongs to the TRAFAC class OBG-HflX-like GTPase superfamily. OBG GTPase family. In terms of assembly, monomer. Mg(2+) is required as a cofactor.

The protein localises to the cytoplasm. An essential GTPase which binds GTP, GDP and possibly (p)ppGpp with moderate affinity, with high nucleotide exchange rates and a fairly low GTP hydrolysis rate. Plays a role in control of the cell cycle, stress response, ribosome biogenesis and in those bacteria that undergo differentiation, in morphogenesis control. The sequence is that of GTPase Obg from Clostridium novyi (strain NT).